A 587-amino-acid chain; its full sequence is Serine/threonine-protein phosphatase 2A 65 kDa regulatory subunit A beta isoform (587 aa).

Ser2 carries the post-translational modification N-acetylserine. HEAT repeat units follow at residues 2–42 (SMID…ALGE), 44–80 (RTRKELIPFLSENNDDDDEVLLAMAEELGVFIPYVGG), 81–119 (VEYAHVLLPPLETLSTVEETCVREKAVESLCRVGSQMRE), 158–196 (DMLKTELRSLYTQLCQDDMPMVRRAAATNLGKFAATVES), 197–235 (AHLKTDVMSMFEDLTQDDQDSVRLLAVEGCAALGKLLEP), 236–274 (QDCVQHILPVIVNFSQDKSWRVRYMVANQLYELCEAVGP), 275–313 (EPTRTELVPAYVRLLRDNEAEVRIAAAGKVTKFCRILNP), 315–352 (IAIQHILPCVKELSSDSSQHVRSALASVIMGMAPVLGK), 353–391 (DATIEHLLPIFLSLLKDEFPDVRLNIISKLDQVNQVIGI), 393–430 (LLSQSLLPAIVELAEDRHWRVRLAIIEYIPLLASQLGV), 432–469 (FFDDKLGALCMQWLQDKVHSIRDAAANNLKRLAEEFGP), 470–508 (EWAMQHIVPQVLEMVNNPHYLYRMTILRAVSLLAPVMGS), 509–547 (EITCSKLLPVVMTASKDRVPNIKFNVAKVLQSLIPIVDQ), and 549–586 (VVEKTIRPGLVELSEDPDVDVRFFANQALQSIDNVMMS).

This sequence belongs to the phosphatase 2A regulatory subunit A family. As to quaternary structure, PP2A consists of a common heterodimeric core enzyme, composed of a 36 kDa catalytic subunit (subunit C) and a 65 kDa constant regulatory subunit (subunit A), that associates with a variety of regulatory subunits such as subunits B (the R2/B/PR55/B55, R3/B''/PR72/PR130/PR59 and R5/B'/B56 families). Interacts with B'THETA. Interacts with SRK2E/OST1. Interacts with SIC/RON3. Ubiquitous, with higher levels in roots and flowers (at protein level).

It is found in the cytoplasm. It localises to the cytosol. Its subcellular location is the nucleus. The protein resides in the peroxisome. Functionally, the A subunit of protein phosphatase 2A serves as a scaffolding molecule to coordinate the assembly of the catalytic subunit and a variable regulatory B subunit. Involved during developmental process such as seedling and floral developments. Seems to act as a negative regulator of PP2A catalytic activity. Associates with the serine/threonine-protein phosphatase PP2A catalytic subunit C and regulatory subunit B' to positively regulates beta-oxidation of fatty acids and protoauxins in peroxisomes by dephosphorylating peroxisomal beta-oxidation-related proteins. The chain is Serine/threonine-protein phosphatase 2A 65 kDa regulatory subunit A beta isoform (PP2AA2) from Arabidopsis thaliana (Mouse-ear cress).